A 633-amino-acid chain; its full sequence is Probable potassium transport system protein Kup 3 (633 aa).

Transmembrane regions (helical) follow at residues Leu24 to Phe44, Val61 to Val81, Leu114 to Ile134, Pro148 to Val168, Phe180 to Phe200, Ile222 to Leu242, Trp258 to Leu278, Ile298 to Gly318, Ile348 to Phe368, Ala377 to Met397, Leu405 to Ala425, and Ile427 to Ile447.

Belongs to the HAK/KUP transporter (TC 2.A.72) family.

It is found in the cell inner membrane. The enzyme catalyses K(+)(in) + H(+)(in) = K(+)(out) + H(+)(out). Functionally, transport of potassium into the cell. Likely operates as a K(+):H(+) symporter. This is Probable potassium transport system protein Kup 3 from Rhizobium johnstonii (strain DSM 114642 / LMG 32736 / 3841) (Rhizobium leguminosarum bv. viciae).